We begin with the raw amino-acid sequence, 421 residues long: UPF0229 protein lpl2726 (421 aa).

Residues 83-110 (IAGDRIKRPGGGGSGGAGGNASDSGEGE) form a disordered region. Residues 91–101 (PGGGGSGGAGG) are compositionally biased toward gly residues.

Belongs to the UPF0229 family.

The protein is UPF0229 protein lpl2726 of Legionella pneumophila (strain Lens).